Reading from the N-terminus, the 419-residue chain is Carboxypeptidase A1 (419 aa).

Residues Met-1 to Ala-16 form the signal peptide. Residues Lys-17–Arg-110 constitute a propeptide, activation peptide. The Peptidase M14 domain maps to Thr-121–Thr-414. Positions 179 and 182 each coordinate Zn(2+). Residues His-179 to Glu-182, Arg-237, and Asn-254 to Arg-255 contribute to the substrate site. The cysteines at positions 248 and 271 are disulfide-linked. Residue His-306 participates in Zn(2+) binding. Substrate is bound by residues Ser-307 to Tyr-308 and Tyr-358. The active-site Proton donor/acceptor is the Glu-380.

The protein belongs to the peptidase M14 family. As to quaternary structure, monomer. May form a complex with proelastase 2. It depends on Zn(2+) as a cofactor.

The protein localises to the secreted. The catalysed reaction is Release of a C-terminal amino acid, but little or no action with -Asp, -Glu, -Arg, -Lys or -Pro.. It catalyses the reaction leukotriene C4 + H2O = leukotriene F4 + glycine. Functionally, carboxypeptidase that catalyzes the release of a C-terminal amino acid, but has little or no action with -Asp, -Glu, -Arg, -Lys or -Pro. Catalyzes the conversion of leukotriene C4 to leukotriene F4 via the hydrolysis of an amide bond. This Sus scrofa (Pig) protein is Carboxypeptidase A1 (CPA1).